The sequence spans 128 residues: KRAB domain-containing protein 1 (128 aa).

One can recognise a KRAB domain in the interval 15 to 86 (VAFEDVAVYF…QPQGVLSRND (72 aa)).

The protein is KRAB domain-containing protein 1 (KRBOX1) of Homo sapiens (Human).